A 268-amino-acid chain; its full sequence is Tryptophan synthase alpha chain (268 aa).

Residues E49 and D60 each act as proton acceptor in the active site.

The protein belongs to the TrpA family. As to quaternary structure, tetramer of two alpha and two beta chains.

The catalysed reaction is (1S,2R)-1-C-(indol-3-yl)glycerol 3-phosphate + L-serine = D-glyceraldehyde 3-phosphate + L-tryptophan + H2O. The protein operates within amino-acid biosynthesis; L-tryptophan biosynthesis; L-tryptophan from chorismate: step 5/5. Its function is as follows. The alpha subunit is responsible for the aldol cleavage of indoleglycerol phosphate to indole and glyceraldehyde 3-phosphate. In Escherichia coli O7:K1 (strain IAI39 / ExPEC), this protein is Tryptophan synthase alpha chain.